Consider the following 70-residue polypeptide: Exodeoxyribonuclease 7 small subunit (70 aa).

Belongs to the XseB family. In terms of assembly, heterooligomer composed of large and small subunits.

Its subcellular location is the cytoplasm. The enzyme catalyses Exonucleolytic cleavage in either 5'- to 3'- or 3'- to 5'-direction to yield nucleoside 5'-phosphates.. Functionally, bidirectionally degrades single-stranded DNA into large acid-insoluble oligonucleotides, which are then degraded further into small acid-soluble oligonucleotides. This is Exodeoxyribonuclease 7 small subunit from Streptococcus pneumoniae serotype 2 (strain D39 / NCTC 7466).